A 143-amino-acid polypeptide reads, in one-letter code: Spliceosomal protein DIB1 (143 aa).

The protein belongs to the DIM1 family. As to quaternary structure, component of the 25S [U4/U6.U5] tri-snRNP.

It localises to the nucleus. Its function is as follows. Essential role in pre-mRNA splicing. Also essential for entry into mitosis (G2/M progression) as well as for chromosome segregation during mitosis. In Eremothecium gossypii (strain ATCC 10895 / CBS 109.51 / FGSC 9923 / NRRL Y-1056) (Yeast), this protein is Spliceosomal protein DIB1 (DIB1).